We begin with the raw amino-acid sequence, 382 residues long: Chaperone protein DnaJ (382 aa).

One can recognise a J domain in the interval 5 to 70 (DYYEVLGVSR…DKKAAYDRYG (66 aa)). A CR-type zinc finger spans residues 141–219 (GVQKTINVPA…CHGAGRVEKE (79 aa)). Zn(2+) is bound by residues cysteine 154, cysteine 157, cysteine 171, cysteine 174, cysteine 193, cysteine 196, cysteine 207, and cysteine 210. CXXCXGXG motif repeat units lie at residues 154–161 (CDACKGTG), 171–178 (CPTCSGMG), 193–200 (CPTCNGMG), and 207–214 (CKVCHGAG).

It belongs to the DnaJ family. Homodimer. Zn(2+) is required as a cofactor.

It localises to the cytoplasm. Functionally, participates actively in the response to hyperosmotic and heat shock by preventing the aggregation of stress-denatured proteins and by disaggregating proteins, also in an autonomous, DnaK-independent fashion. Unfolded proteins bind initially to DnaJ; upon interaction with the DnaJ-bound protein, DnaK hydrolyzes its bound ATP, resulting in the formation of a stable complex. GrpE releases ADP from DnaK; ATP binding to DnaK triggers the release of the substrate protein, thus completing the reaction cycle. Several rounds of ATP-dependent interactions between DnaJ, DnaK and GrpE are required for fully efficient folding. Also involved, together with DnaK and GrpE, in the DNA replication of plasmids through activation of initiation proteins. The sequence is that of Chaperone protein DnaJ from Cereibacter sphaeroides (strain ATCC 17023 / DSM 158 / JCM 6121 / CCUG 31486 / LMG 2827 / NBRC 12203 / NCIMB 8253 / ATH 2.4.1.) (Rhodobacter sphaeroides).